The following is a 95-amino-acid chain: DNA-directed RNA polymerase subunit Rpo6 (95 aa).

It belongs to the archaeal Rpo6/eukaryotic RPB6 RNA polymerase subunit family. Part of the 13-subunit RNA polymerase complex.

It is found in the cytoplasm. It carries out the reaction RNA(n) + a ribonucleoside 5'-triphosphate = RNA(n+1) + diphosphate. Its function is as follows. DNA-dependent RNA polymerase (RNAP) catalyzes the transcription of DNA into RNA using the four ribonucleoside triphosphates as substrates. This chain is DNA-directed RNA polymerase subunit Rpo6, found in Saccharolobus solfataricus (strain ATCC 35092 / DSM 1617 / JCM 11322 / P2) (Sulfolobus solfataricus).